The primary structure comprises 241 residues: Polyol phosphate phosphatase PYP1 (241 aa).

Catalysis depends on Asp-9, which acts as the Nucleophile. Residues Asp-9, Asp-11, and Asp-179 each contribute to the Mg(2+) site. The active-site Proton donor is the Asp-11.

The protein belongs to the HAD-like hydrolase superfamily. Requires Mg(2+) as cofactor.

The protein localises to the cytoplasm. The protein resides in the nucleus. The catalysed reaction is D-ribitol 5-phosphate + H2O = ribitol + phosphate. The enzyme catalyses D-sorbitol 6-phosphate + H2O = D-sorbitol + phosphate. It carries out the reaction sn-glycerol 1-phosphate + H2O = glycerol + phosphate. It catalyses the reaction D-erythrose 4-phosphate + H2O = D-erythrose + phosphate. Functionally, hydrolyzes sugar alcohol (polyol) phosphates. Dephosphorylates a variety of substrates, including: sn-glycerol 1-phosphate (D-glycerol 3-phosphate), D-ribitol 5-phosphate, D-sorbitol 6-phosphate (D-glucitol 6-phosphate), and D-erythrose 4-phosphate. Prevents accumulation of toxic levels of polyol phosphates, which can impair glycolysis by inhibiting glucose-6-phosphate isomerase. This is Polyol phosphate phosphatase PYP1 from Saccharomyces cerevisiae (strain ATCC 204508 / S288c) (Baker's yeast).